Consider the following 287-residue polypeptide: ATP synthase gamma chain (287 aa).

It belongs to the ATPase gamma chain family. In terms of assembly, F-type ATPases have 2 components, CF(1) - the catalytic core - and CF(0) - the membrane proton channel. CF(1) has five subunits: alpha(3), beta(3), gamma(1), delta(1), epsilon(1). CF(0) has three main subunits: a, b and c.

The protein resides in the cell membrane. In terms of biological role, produces ATP from ADP in the presence of a proton gradient across the membrane. The gamma chain is believed to be important in regulating ATPase activity and the flow of protons through the CF(0) complex. This Mycoplasmopsis agalactiae (strain NCTC 10123 / CIP 59.7 / PG2) (Mycoplasma agalactiae) protein is ATP synthase gamma chain.